The sequence spans 609 residues: MNILNPGKFKCIVFDQLRHTWTFLLFICDFLAKIYRTPRITAHQEQLANHNNNNNNNNDLIMEQDMPEEEVGQPEEALPQQDNGEVVDRFNAIQAAVELMDAASDLDEEEEEEDDDVDVDVDYGDTDSESEFEEMYSDEWTSSSDELDEGTELSKSVLNVFLSSDKQQSQMAGQIPMYAFQPLRLVKCQYRDKHIPGGFPLARSGHRIIASNSHLYSLGGYNPRSAMSASRHGRCLLFQELWSYNFATRTWRLELNAGNAANMPVELASNALTIHNNVLISHGGTGYPFGVSCSNDCYVYRTASAGATPGVDRLQVKGDLPTAQYGPGIVIHKHFLYTIGGTTGFDYTCDVYRLDLRTGIWENVYISRPEMRDDPEGRYRHEVVYDGKHIFVLGGGTSHSVYDLQRIPAYNLEANCWDYFETYPDQRAADADDGNRGYPKPRKCFSCVQHQSSTGDIEAFITGGLQGDFSTYFSDIWKLNLRTKHWYRIETAILPRPLYFHSAAHSDNGCMYVFGGIEYIDKEMRRRNDLYKMWMTVPKLSEMCWDAITYYNDNLDLYDRKTLLEAGIPKRFTERLPPQRRRRLDTSQPDPSMLISLYSNPKRARSSTQ.

Residues 103-146 are disordered; it reads ASDLDEEEEEEDDDVDVDVDYGDTDSESEFEEMYSDEWTSSSDE. Acidic residues predominate over residues 104 to 137; sequence SDLDEEEEEEDDDVDVDVDYGDTDSESEFEEMYS. Kelch repeat units follow at residues 214–277, 279–334, 335–381, 389–437, 458–508, and 510–554; these read HLYS…IHNN, LISH…IHKH, FLYT…RYRH, HIFV…GNRG, EAFI…HSDN, and CMYV…YNDN. Residues 576–609 are disordered; that stretch reads LPPQRRRRLDTSQPDPSMLISLYSNPKRARSSTQ.

In terms of assembly, interacts with Elongin-C; may be the substrate recognition component of an E3 ubiquitin ligase complex.

Activates the Pk92B/DASK1-MAPK signaling cascade. The polypeptide is Kelch domain-containing protein 10 homolog (slim) (Drosophila melanogaster (Fruit fly)).